A 514-amino-acid chain; its full sequence is Cytochrome P450 monooxygenase MO6277 (514 aa).

A helical membrane pass occupies residues 6–26; that stretch reads LTVLALLGGTLLLYCSGLVIY. Cysteine 457 provides a ligand contact to heme.

The protein belongs to the cytochrome P450 family. The cofactor is heme.

It localises to the membrane. It catalyses the reaction polyporic acid + reduced [NADPH--hemoprotein reductase] + O2 = ascocorynin + oxidized [NADPH--hemoprotein reductase] + H2O + H(+). The protein operates within secondary metabolite biosynthesis. Cytochrome P450 monooxygenase that hydroxylates polyporic acid produced by the nonribosomal peptide synthetase acyN to produce the less toxic metabolite ascocorynin. The hydrophobic substrate polyporic acid might approach the active site from the membrane and, after hydroxylation into ascocorynin, leaves into the cytoplasm. MO6277 appears vital to avoid high-level accumulation of polyporic acid in the fungal membrane. In Ascocoryne sarcoides (Purple jellydisc fungus), this protein is Cytochrome P450 monooxygenase MO6277.